Here is a 261-residue protein sequence, read N- to C-terminus: Short-chain dehydrogenase/reductase AFUA_1G00990 (261 aa).

6 residues coordinate NADP(+): L19, D67, N94, Y169, K173, and T213. The Proton donor role is filled by Y169. K173 (lowers pKa of active site Tyr) is an active-site residue.

Belongs to the short-chain dehydrogenases/reductases (SDR) family.

Functionally, short-chain dehydrogenase/reductase; part of the gene cluster that mediates the biosynthesis of fumigermin that inhibits germination of spores of the inducing S.rapamycinicus, and thus helps the fungus to defend resources in the shared habitat against a bacterial competitor. The partially reducing polyketide synthase fngA alone is sufficient for the production of fumigermin. FgnA catalyzes the condensation of 3 malonyl-CoA units to an acetyl-CoA starter, and 3 methylations to yield fumigermin. It is remarkable that the five cluster genes including fgnA are conserved in distantly related fungi, supporting the assumption of a fumigermin cluster; it is thus possible that originally all five genes were functional, but that the genes encoding tailoring enzymes became inactive from mutations, similar to the case of the fgnA gene in strains A1163 and Af293. The protein is Short-chain dehydrogenase/reductase AFUA_1G00990 of Aspergillus fumigatus (strain ATCC MYA-4609 / CBS 101355 / FGSC A1100 / Af293) (Neosartorya fumigata).